We begin with the raw amino-acid sequence, 122 residues long: MDYEFKKNTLDGTYHANFSMGHEAMGRWLVEDVAKDTELLAELYKQIAAVKNTQDEWKLSGKVMTLVLTDQEVIVQENALFENSEEEFEEDIHIYDDECISVCGLEDFETMLQSWEAFIRRF.

It belongs to the UPF0231 family.

The sequence is that of UPF0231 protein VSAL_I2591 from Aliivibrio salmonicida (strain LFI1238) (Vibrio salmonicida (strain LFI1238)).